A 256-amino-acid chain; its full sequence is Thiazole synthase (256 aa).

Lys96 functions as the Schiff-base intermediate with DXP in the catalytic mechanism. Residues Gly157, 183 to 184, and 205 to 206 contribute to the 1-deoxy-D-xylulose 5-phosphate site; these read AG and NT.

The protein belongs to the ThiG family. In terms of assembly, homotetramer. Forms heterodimers with either ThiH or ThiS.

The protein resides in the cytoplasm. The enzyme catalyses [ThiS sulfur-carrier protein]-C-terminal-Gly-aminoethanethioate + 2-iminoacetate + 1-deoxy-D-xylulose 5-phosphate = [ThiS sulfur-carrier protein]-C-terminal Gly-Gly + 2-[(2R,5Z)-2-carboxy-4-methylthiazol-5(2H)-ylidene]ethyl phosphate + 2 H2O + H(+). The protein operates within cofactor biosynthesis; thiamine diphosphate biosynthesis. Its function is as follows. Catalyzes the rearrangement of 1-deoxy-D-xylulose 5-phosphate (DXP) to produce the thiazole phosphate moiety of thiamine. Sulfur is provided by the thiocarboxylate moiety of the carrier protein ThiS. In vitro, sulfur can be provided by H(2)S. The chain is Thiazole synthase from Bacillus cereus (strain ATCC 10987 / NRS 248).